The primary structure comprises 37 residues: Large ribosomal subunit protein bL36c (37 aa).

It belongs to the bacterial ribosomal protein bL36 family.

The protein resides in the plastid. Its subcellular location is the chloroplast. The protein is Large ribosomal subunit protein bL36c (rpl36) of Anthoceros angustus (Hornwort).